A 474-amino-acid chain; its full sequence is tRNA modification GTPase MnmE (474 aa).

(6S)-5-formyl-5,6,7,8-tetrahydrofolate contacts are provided by arginine 35, glutamate 92, and lysine 135. Positions 231-396 (GLHVVLAGQP…LRAALLEIAG (166 aa)) constitute a TrmE-type G domain. Asparagine 241 is a K(+) binding site. GTP contacts are provided by residues 241–246 (NVGKSS), 260–266 (TPIAGTT), 285–288 (DTAG), and 377–379 (SAR). Residue serine 245 participates in Mg(2+) binding. The K(+) site is built by threonine 260, isoleucine 262, and threonine 265. Threonine 266 lines the Mg(2+) pocket. Residue lysine 474 participates in (6S)-5-formyl-5,6,7,8-tetrahydrofolate binding.

Belongs to the TRAFAC class TrmE-Era-EngA-EngB-Septin-like GTPase superfamily. TrmE GTPase family. Homodimer. Heterotetramer of two MnmE and two MnmG subunits. Requires K(+) as cofactor.

The protein resides in the cytoplasm. Exhibits a very high intrinsic GTPase hydrolysis rate. Involved in the addition of a carboxymethylaminomethyl (cmnm) group at the wobble position (U34) of certain tRNAs, forming tRNA-cmnm(5)s(2)U34. The polypeptide is tRNA modification GTPase MnmE (Ralstonia nicotianae (strain ATCC BAA-1114 / GMI1000) (Ralstonia solanacearum)).